The following is a 441-amino-acid chain: Arginine biosynthesis bifunctional protein ArgJ, mitochondrial (441 aa).

Thr-177, Lys-204, Thr-215, Glu-301, Asn-436, and Ser-441 together coordinate substrate. Residue Thr-215 is the Nucleophile of the active site.

This sequence belongs to the ArgJ family. As to quaternary structure, heterodimer of an alpha and a beta chain. In terms of processing, the alpha and beta chains are autoproteolytically processed from a single precursor protein within the mitochondrion.

It is found in the mitochondrion matrix. It catalyses the reaction N(2)-acetyl-L-ornithine + L-glutamate = N-acetyl-L-glutamate + L-ornithine. The enzyme catalyses L-glutamate + acetyl-CoA = N-acetyl-L-glutamate + CoA + H(+). Its pathway is amino-acid biosynthesis; L-arginine biosynthesis; L-ornithine and N-acetyl-L-glutamate from L-glutamate and N(2)-acetyl-L-ornithine (cyclic): step 1/1. The protein operates within amino-acid biosynthesis; L-arginine biosynthesis; N(2)-acetyl-L-ornithine from L-glutamate: step 1/4. Functionally, catalyzes two activities which are involved in the cyclic version of arginine biosynthesis: the synthesis of acetylglutamate from glutamate and acetyl-CoA, and of ornithine by transacetylation between acetylornithine and glutamate. The protein is Arginine biosynthesis bifunctional protein ArgJ, mitochondrial of Lachancea thermotolerans (strain ATCC 56472 / CBS 6340 / NRRL Y-8284) (Yeast).